The chain runs to 101 residues: NAD(P)H-quinone oxidoreductase subunit 4L, chloroplastic (101 aa).

3 helical membrane-spanning segments follow: residues 2 to 22 (IFQS…YGLL), 32 to 52 (MSLE…SNFV), and 61 to 81 (VLAL…LAII).

This sequence belongs to the complex I subunit 4L family. NDH is composed of at least 16 different subunits, 5 of which are encoded in the nucleus.

Its subcellular location is the plastid. It is found in the chloroplast thylakoid membrane. It carries out the reaction a plastoquinone + NADH + (n+1) H(+)(in) = a plastoquinol + NAD(+) + n H(+)(out). It catalyses the reaction a plastoquinone + NADPH + (n+1) H(+)(in) = a plastoquinol + NADP(+) + n H(+)(out). In terms of biological role, NDH shuttles electrons from NAD(P)H:plastoquinone, via FMN and iron-sulfur (Fe-S) centers, to quinones in the photosynthetic chain and possibly in a chloroplast respiratory chain. The immediate electron acceptor for the enzyme in this species is believed to be plastoquinone. Couples the redox reaction to proton translocation, and thus conserves the redox energy in a proton gradient. The sequence is that of NAD(P)H-quinone oxidoreductase subunit 4L, chloroplastic from Nephroselmis olivacea (Green alga).